A 313-amino-acid polypeptide reads, in one-letter code: Cytochrome c biogenesis protein CcsA (313 aa).

A run of 8 helical transmembrane segments spans residues 9 to 29 (ILTHISFSIVSIVITIHLITF), 44 to 64 (GIIVTFFCITGLLVTRWISSG), 71 to 91 (LYESLIFLSWSFSLIHIIPYF), 111 to 131 (GFATSGILTEIHQSGILVPAL), 143 to 163 (MILGYAALLCGSLLSVALLVI), 217 to 237 (VISLGFTFLTIGILSGAVWAN), 244 to 264 (WNWDPKETWAFITWIVFAIYL), and 278 to 298 (AIVASIGFLIIWICYFGVNLL).

It belongs to the CcmF/CycK/Ccl1/NrfE/CcsA family. May interact with Ccs1.

Its subcellular location is the plastid. It localises to the chloroplast thylakoid membrane. Its function is as follows. Required during biogenesis of c-type cytochromes (cytochrome c6 and cytochrome f) at the step of heme attachment. The chain is Cytochrome c biogenesis protein CcsA from Solanum bulbocastanum (Wild potato).